Reading from the N-terminus, the 457-residue chain is Phosphoglucosamine mutase (457 aa).

Catalysis depends on S106, which acts as the Phosphoserine intermediate. Mg(2+) is bound by residues S106, D245, D247, and D249. Position 106 is a phosphoserine (S106).

This sequence belongs to the phosphohexose mutase family. It depends on Mg(2+) as a cofactor. In terms of processing, activated by phosphorylation.

The enzyme catalyses alpha-D-glucosamine 1-phosphate = D-glucosamine 6-phosphate. In terms of biological role, catalyzes the conversion of glucosamine-6-phosphate to glucosamine-1-phosphate. This is Phosphoglucosamine mutase from Methylibium petroleiphilum (strain ATCC BAA-1232 / LMG 22953 / PM1).